The following is a 955-amino-acid chain: 26S proteasome non-ATPase regulatory subunit 1 (955 aa).

A disordered region spans residues 279 to 313 (PGSTNTGTVPGSEKDSDAMEAEEKPGSTCVGKSAE). Basic and acidic residues predominate over residues 290 to 303 (SEKDSDAMEAEEKP). PC repeat units follow at residues 403–436 (TATA…PGSA), 441–474 (GGLY…DIVR), 476–510 (GGSL…VTGE), 511–545 (AAGL…EKIL), 547–580 (GLAV…ILRR), 581–616 (SGMY…DVRR), 617–649 (AAVE…PHVR), 651–685 (GAAM…YVRQ), 686–726 (GALI…DVMA), and 729–761 (GAIL…PSVV). Disordered regions lie at residues 839–879 (AKKK…NFQL) and 932–955 (AHGP…YIDD). 2 stretches are compositionally biased toward basic and acidic residues: residues 842 to 854 (KEKE…KEEE) and 861 to 874 (TEKK…KEPE). Over residues 938 to 955 (EEEEQEPEPPEPFEYIDD) the composition is skewed to acidic residues.

Belongs to the proteasome subunit S1 family. As to quaternary structure, component of the 19S proteasome regulatory particle complex. The 26S proteasome consists of a 20S core particle (CP) and two 19S regulatory subunits (RP). The regulatory particle is made of a lid composed of 9 subunits, a base containing 6 ATPases and few additional components including PSMD1. Interacts with ADRM1.

Functionally, component of the 26S proteasome, a multiprotein complex involved in the ATP-dependent degradation of ubiquitinated proteins. This complex plays a key role in the maintenance of protein homeostasis by removing misfolded or damaged proteins, which could impair cellular functions, and by removing proteins whose functions are no longer required. Therefore, the proteasome participates in numerous cellular processes, including cell cycle progression, apoptosis, or DNA damage repair. The chain is 26S proteasome non-ATPase regulatory subunit 1 (PSMD1) from Gallus gallus (Chicken).